The primary structure comprises 686 residues: Asparagine-rich protein (686 aa).

Residues 1 to 18 form the signal peptide; it reads MKGTSALLLIGFFHATIS. Disordered stretches follow at residues 34 to 73, 125 to 148, and 201 to 236; these read KRGN…DKTA, SLTS…SSSI, and ITRQ…QPPN. The span at 37–49 shows a compositional bias: polar residues; sequence NLNTGGQITSNSA. The segment covering 62–73 has biased composition (basic and acidic residues); sequence EPPKRRNTDKTA.

As to expression, prismatic layer of shell (at protein level). Expressed primarily in the mantle with highest level in the mantle edge and lower level in the mantle pallium.

The protein resides in the secreted. The sequence is that of Asparagine-rich protein from Margaritifera margaritifera (Freshwater pearl mussel).